Here is a 287-residue protein sequence, read N- to C-terminus: uncharacterized protein (287 aa).

The HTH araC/xylS-type domain maps to Trp-183 to Ile-281. 2 DNA-binding regions (H-T-H motif) span residues Lys-200–Leu-221 and Met-248–Glu-271.

This is an uncharacterized protein from Bacillus subtilis (strain 168).